A 560-amino-acid chain; its full sequence is Calnexin homolog (560 aa).

Residues 1 to 22 form the signal peptide; sequence MKYGKVSFLALLCSLYVRGSLA. The Lumenal portion of the chain corresponds to 23-489; sequence DPESEQEPLV…ETIIETPEIG (467 aa). Residues Cys132 and Cys163 are joined by a disulfide bond. An alpha-D-glucoside is bound by residues Tyr136, Lys138, Tyr154, and Asp161. Residues 242–375 form a p domain (Extended arm) region; sequence IYDPEDIKPA…RKIPNPDYFD (134 aa). A run of 5 repeats spans residues 244–255, 261–272, 280–291, 299–310, and 314–324. 2 4 X approximate repeats regions span residues 244–310 and 314–371; these read DPED…DWDD and GDWI…IPNP. A disordered region spans residues 253–273; sequence WVDEPEIPDPNAVKPDDWDED. Cysteines 326 and 332 form a disulfide. 3 consecutive repeat copies span residues 333 to 343, 347 to 357, and 361 to 371. Glu391 serves as a coordination point for an alpha-D-glucoside. The N-linked (GlcNAc...) asparagine glycan is linked to Asn418. The chain crosses the membrane as a helical span at residues 490–512; it reads IAIVAVLGSLTAVILTCYFYFFA. The Cytoplasmic segment spans residues 513–560; it reads SSSPASLSTGTTEAEKEQQEKFKQETETEKIDVSYAPETESPTAKNED. The disordered stretch occupies residues 517–560; it reads ASLSTGTTEAEKEQQEKFKQETETEKIDVSYAPETESPTAKNED. Residues 525–544 are compositionally biased toward basic and acidic residues; that stretch reads EAEKEQQEKFKQETETEKID. Thr551 bears the Phosphothreonine mark. At Ser553 the chain carries Phosphoserine. The residue at position 555 (Thr555) is a Phosphothreonine.

The protein belongs to the calreticulin family.

Its subcellular location is the endoplasmic reticulum membrane. Its function is as follows. Calcium-binding protein that interacts with newly synthesized monoglucosylated glycoproteins in the endoplasmic reticulum. It may act in assisting protein assembly and/or in the retention within the ER of unassembled protein subunits. It seems to play a major role in the quality control apparatus of the ER by the retention of incorrectly folded proteins. The polypeptide is Calnexin homolog (cal1) (Schizosaccharomyces pombe (strain 972 / ATCC 24843) (Fission yeast)).